The chain runs to 292 residues: Cyclin-dependent kinase 5 homolog (292 aa).

Positions 4 to 285 (YSKIEKLGEG…AAAALKHPYF (282 aa)) constitute a Protein kinase domain. ATP-binding positions include 10–18 (LGEGTYGIV) and Lys-33. Thr-14 carries the post-translational modification Phosphothreonine. Tyr-15 is subject to Phosphotyrosine. Residue Asp-126 is the Proton acceptor of the active site.

This sequence belongs to the protein kinase superfamily. CMGC Ser/Thr protein kinase family. CDC2/CDKX subfamily.

The enzyme catalyses L-seryl-[protein] + ATP = O-phospho-L-seryl-[protein] + ADP + H(+). It carries out the reaction L-threonyl-[protein] + ATP = O-phospho-L-threonyl-[protein] + ADP + H(+). With respect to regulation, phosphorylation at Thr-14 or Tyr-15 inactivates the enzyme. This Dictyostelium discoideum (Social amoeba) protein is Cyclin-dependent kinase 5 homolog (cdk5).